Consider the following 350-residue polypeptide: 4-hydroxy-3-methylbut-2-enyl diphosphate reductase (350 aa).

Residue Cys36 coordinates [4Fe-4S] cluster. (2E)-4-hydroxy-3-methylbut-2-enyl diphosphate contacts are provided by His65 and His101. 2 residues coordinate dimethylallyl diphosphate: His65 and His101. Isopentenyl diphosphate-binding residues include His65 and His101. Residue Cys123 coordinates [4Fe-4S] cluster. His151 provides a ligand contact to (2E)-4-hydroxy-3-methylbut-2-enyl diphosphate. His151 contributes to the dimethylallyl diphosphate binding site. Residue His151 participates in isopentenyl diphosphate binding. The Proton donor role is filled by Glu153. Thr192 provides a ligand contact to (2E)-4-hydroxy-3-methylbut-2-enyl diphosphate. Residue Cys222 coordinates [4Fe-4S] cluster. 4 residues coordinate (2E)-4-hydroxy-3-methylbut-2-enyl diphosphate: Ser250, Ser251, Asn252, and Ser295. Positions 250, 251, 252, and 295 each coordinate dimethylallyl diphosphate. Positions 250, 251, 252, and 295 each coordinate isopentenyl diphosphate.

Belongs to the IspH family. [4Fe-4S] cluster is required as a cofactor.

It catalyses the reaction isopentenyl diphosphate + 2 oxidized [2Fe-2S]-[ferredoxin] + H2O = (2E)-4-hydroxy-3-methylbut-2-enyl diphosphate + 2 reduced [2Fe-2S]-[ferredoxin] + 2 H(+). The enzyme catalyses dimethylallyl diphosphate + 2 oxidized [2Fe-2S]-[ferredoxin] + H2O = (2E)-4-hydroxy-3-methylbut-2-enyl diphosphate + 2 reduced [2Fe-2S]-[ferredoxin] + 2 H(+). Its pathway is isoprenoid biosynthesis; dimethylallyl diphosphate biosynthesis; dimethylallyl diphosphate from (2E)-4-hydroxy-3-methylbutenyl diphosphate: step 1/1. It functions in the pathway isoprenoid biosynthesis; isopentenyl diphosphate biosynthesis via DXP pathway; isopentenyl diphosphate from 1-deoxy-D-xylulose 5-phosphate: step 6/6. In terms of biological role, catalyzes the conversion of 1-hydroxy-2-methyl-2-(E)-butenyl 4-diphosphate (HMBPP) into a mixture of isopentenyl diphosphate (IPP) and dimethylallyl diphosphate (DMAPP). Acts in the terminal step of the DOXP/MEP pathway for isoprenoid precursor biosynthesis. In Rhizobium meliloti (strain 1021) (Ensifer meliloti), this protein is 4-hydroxy-3-methylbut-2-enyl diphosphate reductase.